The chain runs to 376 residues: CCA-adding enzyme (376 aa).

ATP is bound by residues G23 and R26. CTP contacts are provided by G23 and R26. The Mg(2+) site is built by E36 and D38. 3 residues coordinate ATP: R106, R152, and R155. Residues R106, R152, and R155 each coordinate CTP.

This sequence belongs to the tRNA nucleotidyltransferase/poly(A) polymerase family. Bacterial CCA-adding enzyme type 2 subfamily. It depends on Mg(2+) as a cofactor.

It carries out the reaction a tRNA precursor + 2 CTP + ATP = a tRNA with a 3' CCA end + 3 diphosphate. The catalysed reaction is a tRNA with a 3' CCA end + 2 CTP + ATP = a tRNA with a 3' CCACCA end + 3 diphosphate. Functionally, catalyzes the addition and repair of the essential 3'-terminal CCA sequence in tRNAs without using a nucleic acid template. Adds these three nucleotides in the order of C, C, and A to the tRNA nucleotide-73, using CTP and ATP as substrates and producing inorganic pyrophosphate. tRNA 3'-terminal CCA addition is required both for tRNA processing and repair. Also involved in tRNA surveillance by mediating tandem CCA addition to generate a CCACCA at the 3' terminus of unstable tRNAs. While stable tRNAs receive only 3'-terminal CCA, unstable tRNAs are marked with CCACCA and rapidly degraded. The chain is CCA-adding enzyme from Coxiella burnetii (strain RSA 331 / Henzerling II).